Reading from the N-terminus, the 196-residue chain is Rho-related protein racL (196 aa).

10-17 lines the GTP pocket; sequence GDGAVGKT. The short motif at 32–40 is the Effector region element; sequence YQPTVFDNF. Residues 57–61 and 116–119 each bind GTP; these read DTAGQ and TQND. Cysteine methyl ester is present on Cys193. Residue Cys193 is the site of S-geranylgeranyl cysteine attachment. Positions 194 to 196 are cleaved as a propeptide — removed in mature form; sequence IIL.

Belongs to the small GTPase superfamily. Rho family.

Its subcellular location is the cell membrane. The chain is Rho-related protein racL (racL) from Dictyostelium discoideum (Social amoeba).